Consider the following 254-residue polypeptide: Diphthine synthase (254 aa).

S-adenosyl-L-methionine-binding positions include Leu11, Asp86, Ile89, 114-115, Leu166, Leu207, and His232; that span reads SV.

The protein belongs to the diphthine synthase family. In terms of assembly, homodimer.

It carries out the reaction 2-[(3S)-amino-3-carboxypropyl]-L-histidyl-[translation elongation factor 2] + 3 S-adenosyl-L-methionine = diphthine-[translation elongation factor 2] + 3 S-adenosyl-L-homocysteine + 3 H(+). It functions in the pathway protein modification; peptidyl-diphthamide biosynthesis. Its function is as follows. S-adenosyl-L-methionine-dependent methyltransferase that catalyzes the trimethylation of the amino group of the modified target histidine residue in translation elongation factor 2 (EF-2), to form an intermediate called diphthine. The three successive methylation reactions represent the second step of diphthamide biosynthesis. This is Diphthine synthase from Sulfurisphaera tokodaii (strain DSM 16993 / JCM 10545 / NBRC 100140 / 7) (Sulfolobus tokodaii).